A 155-amino-acid chain; its full sequence is 6,7-dimethyl-8-ribityllumazine synthase (155 aa).

Residues F23, 57–59 (AFE), and 80–82 (AVI) each bind 5-amino-6-(D-ribitylamino)uracil. 85 to 86 (AT) is a binding site for (2S)-2-hydroxy-3-oxobutyl phosphate. Catalysis depends on H88, which acts as the Proton donor. Y113 lines the 5-amino-6-(D-ribitylamino)uracil pocket. R127 contributes to the (2S)-2-hydroxy-3-oxobutyl phosphate binding site.

Belongs to the DMRL synthase family.

The catalysed reaction is (2S)-2-hydroxy-3-oxobutyl phosphate + 5-amino-6-(D-ribitylamino)uracil = 6,7-dimethyl-8-(1-D-ribityl)lumazine + phosphate + 2 H2O + H(+). Its pathway is cofactor biosynthesis; riboflavin biosynthesis; riboflavin from 2-hydroxy-3-oxobutyl phosphate and 5-amino-6-(D-ribitylamino)uracil: step 1/2. Catalyzes the formation of 6,7-dimethyl-8-ribityllumazine by condensation of 5-amino-6-(D-ribitylamino)uracil with 3,4-dihydroxy-2-butanone 4-phosphate. This is the penultimate step in the biosynthesis of riboflavin. The chain is 6,7-dimethyl-8-ribityllumazine synthase from Moorella thermoacetica (strain ATCC 39073 / JCM 9320).